Consider the following 548-residue polypeptide: Thermosome subunit beta (548 aa).

Belongs to the TCP-1 chaperonin family. In terms of assembly, forms a Heterooligomeric complex of two stacked eight-membered rings.

Its function is as follows. Molecular chaperone; binds unfolded polypeptides in vitro, and has a weak ATPase activity. This Aeropyrum pernix (strain ATCC 700893 / DSM 11879 / JCM 9820 / NBRC 100138 / K1) protein is Thermosome subunit beta (thsB).